A 514-amino-acid polypeptide reads, in one-letter code: GMP synthase [glutamine-hydrolyzing] (514 aa).

Residues methionine 9–aspartate 199 enclose the Glutamine amidotransferase type-1 domain. Cysteine 86 functions as the Nucleophile in the catalytic mechanism. Catalysis depends on residues histidine 173 and glutamate 175. Residues tryptophan 200–arginine 389 enclose the GMPS ATP-PPase domain. Residue serine 227 to serine 233 coordinates ATP.

In terms of assembly, homodimer.

The catalysed reaction is XMP + L-glutamine + ATP + H2O = GMP + L-glutamate + AMP + diphosphate + 2 H(+). The protein operates within purine metabolism; GMP biosynthesis; GMP from XMP (L-Gln route): step 1/1. Catalyzes the synthesis of GMP from XMP. The protein is GMP synthase [glutamine-hydrolyzing] of Exiguobacterium sibiricum (strain DSM 17290 / CCUG 55495 / CIP 109462 / JCM 13490 / 255-15).